Here is an 875-residue protein sequence, read N- to C-terminus: MELASKYNPADVEGKWYQYWLDNKLFSSKPDGREPYTVVIPPPNVTGVLHMGHMLNNTIQDILVRRARMEGKNACWVPGTDHASIATEAKVVNKLAGQGIKKTDLSRDEFLKHAWAWTEEHGGIILKQLRKLGASCDWDRTAFTMDEERSESVIKVFVDLYNKGLIYRGVRMVNWDPKALTALSDEEVIYKEEHSKLYYLRYKVEGDAEGRYAVVATTRPETIMGDTAMCINPNDPKNQWLKGKKVIVPLVNRIIPVIEDDYVDIEFGTGCLKVTPAHDVNDYMLGEKYNLPSIDIFNDNGTLSEAAGLYVGMDRFDVRKQIEQDLQAAGLLEKVEAYTNKVGFSERTNVAIEPKLSMQWFLKMQHFADMALPPVMNDELKFYPAKYKNTYKNWLENIKDWCISRQLWWGHRIPAYFLPEGGYVVAETAEEALKLAQEKTGNTNLKMEDLRQDDDCLDTWFSSWLWPISLFNGINNPNNEEINYYYPTSDLVTGPDIIFFWVARMIMAGYEYKGDMPFKNVYFTGIVRDKLGRKMSKSLGNSPDPLELIDKYGADGVRMGMMLAAPAGNDILFDDALCEQGRNFNNKIWNAFRLVKGWEVADIAQPEYARLATEWFESMLAKTAAEVADLFGKYRLSEALMAVYKLFWDEFSSWYLEMIKPAYGQPIDKATYEKTLGFFDNLLKLLHPFMPFITEELWQHIYDRKEGESLMVQQLNIPTACNEIIVKEFEVVKEVIGGIRTIRLQKNIAQKETLELQVVGVNPVATFNPVITKLCNLSSIEAVENKADGSGSFMVGTTEYAIPLGNLINTEEELAKLEADLKYQEGFLQSVLKKLSNEKFVSKAPANVIDMERKKQADAESKIASLKESIAALKK.

The 'HIGH' region signature appears at 43-53 (PNVTGVLHMGH). Positions 534-538 (KMSKS) match the 'KMSKS' region motif. An ATP-binding site is contributed by Lys537. Residues 805–875 (GNLINTEEEL…LKESIAALKK (71 aa)) adopt a coiled-coil conformation.

It belongs to the class-I aminoacyl-tRNA synthetase family. ValS type 1 subfamily. In terms of assembly, monomer.

The protein resides in the cytoplasm. It catalyses the reaction tRNA(Val) + L-valine + ATP = L-valyl-tRNA(Val) + AMP + diphosphate. Catalyzes the attachment of valine to tRNA(Val). As ValRS can inadvertently accommodate and process structurally similar amino acids such as threonine, to avoid such errors, it has a 'posttransfer' editing activity that hydrolyzes mischarged Thr-tRNA(Val) in a tRNA-dependent manner. The polypeptide is Valine--tRNA ligase (Phocaeicola vulgatus (strain ATCC 8482 / DSM 1447 / JCM 5826 / CCUG 4940 / NBRC 14291 / NCTC 11154) (Bacteroides vulgatus)).